Here is a 297-residue protein sequence, read N- to C-terminus: Coatomer subunit epsilon-2 (297 aa).

Belongs to the COPE family. Oligomeric complex that consists of at least the alpha, beta, beta', gamma, delta, epsilon and zeta subunits.

The protein localises to the cytoplasm. Its subcellular location is the golgi apparatus membrane. It is found in the cytoplasmic vesicle. The protein resides in the COPI-coated vesicle membrane. The coatomer is a cytosolic protein complex that binds to dilysine motifs and reversibly associates with Golgi non-clathrin-coated vesicles, which further mediate biosynthetic protein transport from the ER, via the Golgi up to the trans Golgi network. The coatomer complex is required for budding from Golgi membranes, and is essential for the retrograde Golgi-to-ER transport of dilysine-tagged proteins. The sequence is that of Coatomer subunit epsilon-2 from Oryza sativa subsp. japonica (Rice).